The sequence spans 284 residues: MTAHLIDGKAIAANLRQQIAQRVAERRQQGLRTPGLAVILVGTDPASQVYVSHKRKDCEEVGFISQAFDLPSDTTQQALTDLIDRLNDDPAVDGILLQLPLPAHLDASLLLERIRPDKDVDGFHPYNIGRLAQRIPLLRPCTPKGIMTLLESTGQDLYGMNAVIVGASNIVGRPMAMELLLAGCTVTVCHRFTKDLAGHVGRADLVVVAAGKPGLVKGEWVKEGAIVIDVGINRQEDGKLVGDVVYETALPRAGWITPVPGGVGPMTRACLLENTLYAAEELHK.

NADP(+) contacts are provided by residues 166–168 and isoleucine 232; that span reads GAS.

It belongs to the tetrahydrofolate dehydrogenase/cyclohydrolase family. As to quaternary structure, homodimer.

It carries out the reaction (6R)-5,10-methylene-5,6,7,8-tetrahydrofolate + NADP(+) = (6R)-5,10-methenyltetrahydrofolate + NADPH. It catalyses the reaction (6R)-5,10-methenyltetrahydrofolate + H2O = (6R)-10-formyltetrahydrofolate + H(+). It participates in one-carbon metabolism; tetrahydrofolate interconversion. Functionally, catalyzes the oxidation of 5,10-methylenetetrahydrofolate to 5,10-methenyltetrahydrofolate and then the hydrolysis of 5,10-methenyltetrahydrofolate to 10-formyltetrahydrofolate. The polypeptide is Bifunctional protein FolD (Pseudomonas entomophila (strain L48)).